A 432-amino-acid chain; its full sequence is D-amino acid dehydrogenase (432 aa).

3 to 17 (VVILGSGVVGVTSAW) lines the FAD pocket.

Belongs to the DadA oxidoreductase family. FAD serves as cofactor.

The enzyme catalyses a D-alpha-amino acid + A + H2O = a 2-oxocarboxylate + AH2 + NH4(+). The protein operates within amino-acid degradation; D-alanine degradation; NH(3) and pyruvate from D-alanine: step 1/1. Its function is as follows. Oxidative deamination of D-amino acids. This is D-amino acid dehydrogenase from Salmonella arizonae (strain ATCC BAA-731 / CDC346-86 / RSK2980).